Consider the following 427-residue polypeptide: Enolase (427 aa).

Gln-163 lines the (2R)-2-phosphoglycerate pocket. The Proton donor role is filled by Glu-205. Residues Asp-242, Glu-285, and Asp-312 each coordinate Mg(2+). Lys-337, Arg-366, Ser-367, and Lys-388 together coordinate (2R)-2-phosphoglycerate. Catalysis depends on Lys-337, which acts as the Proton acceptor.

The protein belongs to the enolase family. Mg(2+) serves as cofactor.

The protein resides in the cytoplasm. It is found in the secreted. The protein localises to the cell surface. The catalysed reaction is (2R)-2-phosphoglycerate = phosphoenolpyruvate + H2O. The protein operates within carbohydrate degradation; glycolysis; pyruvate from D-glyceraldehyde 3-phosphate: step 4/5. Functionally, catalyzes the reversible conversion of 2-phosphoglycerate (2-PG) into phosphoenolpyruvate (PEP). It is essential for the degradation of carbohydrates via glycolysis. This is Enolase from Burkholderia thailandensis (strain ATCC 700388 / DSM 13276 / CCUG 48851 / CIP 106301 / E264).